The sequence spans 307 residues: Manganese-dependent inorganic pyrophosphatase (307 aa).

Mn(2+)-binding residues include His7, Asp11, Asp13, Asp66, His88, and Asp147.

It depends on Mn(2+) as a cofactor.

It localises to the cytoplasm. The catalysed reaction is diphosphate + H2O = 2 phosphate + H(+). The chain is Manganese-dependent inorganic pyrophosphatase (ppaC) from Methanocaldococcus jannaschii (strain ATCC 43067 / DSM 2661 / JAL-1 / JCM 10045 / NBRC 100440) (Methanococcus jannaschii).